Consider the following 230-residue polypeptide: Small ribosomal subunit protein uS3 (230 aa).

A KH type-2 domain is found at V39–K107.

Belongs to the universal ribosomal protein uS3 family. In terms of assembly, part of the 30S ribosomal subunit. Forms a tight complex with proteins S10 and S14.

Its function is as follows. Binds the lower part of the 30S subunit head. Binds mRNA in the 70S ribosome, positioning it for translation. The sequence is that of Small ribosomal subunit protein uS3 from Vesicomyosocius okutanii subsp. Calyptogena okutanii (strain HA).